The following is an 896-amino-acid chain: DNA mismatch repair protein MutS (896 aa).

Residue 599-606 (GPNMAGKS) coordinates ATP.

It belongs to the DNA mismatch repair MutS family.

Its function is as follows. This protein is involved in the repair of mismatches in DNA. It is possible that it carries out the mismatch recognition step. This protein has a weak ATPase activity. This chain is DNA mismatch repair protein MutS, found in Geobacillus kaustophilus (strain HTA426).